Consider the following 43-residue polypeptide: Protein PsbN (43 aa).

A helical membrane pass occupies residues 5-27 (TLVAISISGSLVSFTGYALYTAF).

This sequence belongs to the PsbN family.

It localises to the plastid. The protein localises to the chloroplast thylakoid membrane. May play a role in photosystem I and II biogenesis. The polypeptide is Protein PsbN (Lactoris fernandeziana).